Reading from the N-terminus, the 561-residue chain is DNA ligase B (561 aa).

The active-site N6-AMP-lysine intermediate is the K128.

Belongs to the NAD-dependent DNA ligase family. LigB subfamily.

The catalysed reaction is NAD(+) + (deoxyribonucleotide)n-3'-hydroxyl + 5'-phospho-(deoxyribonucleotide)m = (deoxyribonucleotide)n+m + AMP + beta-nicotinamide D-nucleotide.. Catalyzes the formation of phosphodiester linkages between 5'-phosphoryl and 3'-hydroxyl groups in double-stranded DNA using NAD as a coenzyme and as the energy source for the reaction. The chain is DNA ligase B from Pseudomonas syringae pv. tomato (strain ATCC BAA-871 / DC3000).